The following is a 499-amino-acid chain: Probable cytosol aminopeptidase (499 aa).

The Mn(2+) site is built by K269 and D274. Residue K281 is part of the active site. Residues D292, D351, and E353 each contribute to the Mn(2+) site. R355 is an active-site residue.

Belongs to the peptidase M17 family. Requires Mn(2+) as cofactor.

It localises to the cytoplasm. It carries out the reaction Release of an N-terminal amino acid, Xaa-|-Yaa-, in which Xaa is preferably Leu, but may be other amino acids including Pro although not Arg or Lys, and Yaa may be Pro. Amino acid amides and methyl esters are also readily hydrolyzed, but rates on arylamides are exceedingly low.. The enzyme catalyses Release of an N-terminal amino acid, preferentially leucine, but not glutamic or aspartic acids.. In terms of biological role, presumably involved in the processing and regular turnover of intracellular proteins. Catalyzes the removal of unsubstituted N-terminal amino acids from various peptides. The polypeptide is Probable cytosol aminopeptidase (Haemophilus ducreyi (strain 35000HP / ATCC 700724)).